Reading from the N-terminus, the 270-residue chain is Acetylglutamate kinase (270 aa).

Substrate-binding positions include 41 to 42 (GG), arginine 63, and asparagine 166.

This sequence belongs to the acetylglutamate kinase family. ArgB subfamily.

The protein localises to the cytoplasm. It catalyses the reaction N-acetyl-L-glutamate + ATP = N-acetyl-L-glutamyl 5-phosphate + ADP. The protein operates within amino-acid biosynthesis; L-arginine biosynthesis; N(2)-acetyl-L-ornithine from L-glutamate: step 2/4. Functionally, catalyzes the ATP-dependent phosphorylation of N-acetyl-L-glutamate. This Anaeromyxobacter dehalogenans (strain 2CP-C) protein is Acetylglutamate kinase.